We begin with the raw amino-acid sequence, 100 residues long: MAKNKLRGPKSRNVFHIASQKNFKAKNKAKPVTTNLKKINIMNEEKVNRVNKAFVNVQKELAHFAKSISLEPLQKELIPQQRHESKPVNVDEATRLMALL.

Ser-19 bears the Phosphoserine mark. Lys-21 is subject to N6-acetyllysine. Residue Ser-69 is modified to Phosphoserine.

As to quaternary structure, associates with the pre-60S ribosomal particles.

It is found in the nucleus. Its subcellular location is the nucleolus. Trans-acting factor in ribosome biogenesis required for efficient 40S and 60S subunit production. The chain is Ribosomal biogenesis factor (RBIS) from Bos taurus (Bovine).